The sequence spans 76 residues: Small ribosomal subunit protein bS18 (76 aa).

Belongs to the bacterial ribosomal protein bS18 family. Part of the 30S ribosomal subunit. Forms a tight heterodimer with protein bS6.

In terms of biological role, binds as a heterodimer with protein bS6 to the central domain of the 16S rRNA, where it helps stabilize the platform of the 30S subunit. The protein is Small ribosomal subunit protein bS18 of Petrotoga mobilis (strain DSM 10674 / SJ95).